We begin with the raw amino-acid sequence, 453 residues long: tRNA modification GTPase MnmE (453 aa).

3 residues coordinate (6S)-5-formyl-5,6,7,8-tetrahydrofolate: Arg-22, Glu-79, and Lys-119. In terms of domain architecture, TrmE-type G spans Gly-215–Gly-376. Position 225 (Asn-225) interacts with K(+). Residues Asn-225 to Ser-230, Thr-244 to Thr-250, Asp-269 to Gly-272, and Asn-334 to Asp-337 contribute to the GTP site. A Mg(2+)-binding site is contributed by Ser-229. K(+) is bound by residues Thr-244, Ile-246, and Thr-249. Thr-250 is a binding site for Mg(2+). Position 453 (Lys-453) interacts with (6S)-5-formyl-5,6,7,8-tetrahydrofolate.

The protein belongs to the TRAFAC class TrmE-Era-EngA-EngB-Septin-like GTPase superfamily. TrmE GTPase family. Homodimer. Heterotetramer of two MnmE and two MnmG subunits. The cofactor is K(+).

Its subcellular location is the cytoplasm. Exhibits a very high intrinsic GTPase hydrolysis rate. Involved in the addition of a carboxymethylaminomethyl (cmnm) group at the wobble position (U34) of certain tRNAs, forming tRNA-cmnm(5)s(2)U34. This chain is tRNA modification GTPase MnmE, found in Shewanella amazonensis (strain ATCC BAA-1098 / SB2B).